Here is a 390-residue protein sequence, read N- to C-terminus: Chorismate synthase 1 (390 aa).

The NADP(+) site is built by arginine 39 and arginine 45. The segment at 95–117 (EQEEKEMKRKVTKPRPGHADLNG) is disordered. FMN contacts are provided by residues 132 to 134 (RSS), 253 to 254 (NA), glycine 298, 313 to 317 (KPIPT), and arginine 339.

It belongs to the chorismate synthase family. As to quaternary structure, homotetramer. FMNH2 serves as cofactor.

It catalyses the reaction 5-O-(1-carboxyvinyl)-3-phosphoshikimate = chorismate + phosphate. The protein operates within metabolic intermediate biosynthesis; chorismate biosynthesis; chorismate from D-erythrose 4-phosphate and phosphoenolpyruvate: step 7/7. Catalyzes the anti-1,4-elimination of the C-3 phosphate and the C-6 proR hydrogen from 5-enolpyruvylshikimate-3-phosphate (EPSP) to yield chorismate, which is the branch point compound that serves as the starting substrate for the three terminal pathways of aromatic amino acid biosynthesis. This reaction introduces a second double bond into the aromatic ring system. This chain is Chorismate synthase 1, found in Bacillus cereus (strain ATCC 14579 / DSM 31 / CCUG 7414 / JCM 2152 / NBRC 15305 / NCIMB 9373 / NCTC 2599 / NRRL B-3711).